A 225-amino-acid polypeptide reads, in one-letter code: Uracil-DNA glycosylase (225 aa).

Catalysis depends on D65, which acts as the Proton acceptor.

The protein belongs to the uracil-DNA glycosylase (UDG) superfamily. UNG family.

It localises to the cytoplasm. The catalysed reaction is Hydrolyzes single-stranded DNA or mismatched double-stranded DNA and polynucleotides, releasing free uracil.. Excises uracil residues from the DNA which can arise as a result of misincorporation of dUMP residues by DNA polymerase or due to deamination of cytosine. The chain is Uracil-DNA glycosylase from Clostridium beijerinckii (strain ATCC 51743 / NCIMB 8052) (Clostridium acetobutylicum).